The primary structure comprises 1363 residues: Vascular endothelial growth factor receptor 3 (1363 aa).

Positions 1–24 (MQRGAALCLRLWLCLGLLDGLVSG) are cleaved as a signal peptide. Over 25–775 (YSMTPPTLNI…EGSEDKGSME (751 aa)) the chain is Extracellular. Ig-like C2-type domains lie at 30–127 (PTLN…TAAS), 151–213 (KDAM…WGDQ), 219–326 (PFLV…TEVI), 331–415 (PFIS…ISLE), 422–552 (PQIH…FYVT), 555–671 (PDGF…KYLS), and 678–764 (PRLT…ASVA). 6 N-linked (GlcNAc...) asparagine glycosylation sites follow: Asn33, Asn104, Asn166, Asn251, Asn299, and Asn411. 2 disulfides stabilise this stretch: Cys51–Cys111 and Cys158–Cys206. Cys252 and Cys310 are disulfide-bonded. 3 disulfide bridges follow: Cys445–Cys534, Cys466–Cys486, and Cys578–Cys653. Asn515, Asn527, Asn594, Asn683, and Asn690 each carry an N-linked (GlcNAc...) asparagine glycan. The cysteines at positions 699 and 751 are disulfide-linked. Asn758 carries an N-linked (GlcNAc...) asparagine glycan. Residues 776 to 796 (IVILVGTGVIAVFFWVLLLLI) form a helical membrane-spanning segment. Residues 797 to 1363 (FCNMRRPAHA…RVTFFTDNSY (567 aa)) are Cytoplasmic-facing. 3 positions are modified to phosphotyrosine; by SRC: Tyr830, Tyr833, and Tyr853. The Protein kinase domain maps to 845-1173 (LHLGRVLGYG…ELVEILGDLL (329 aa)). Residues 851–859 (LGYGAFGKV) and Lys879 each bind ATP. Asp1037 functions as the Proton acceptor in the catalytic mechanism. Phosphotyrosine; by autocatalysis and SRC is present on Tyr1063. A phosphotyrosine; by autocatalysis mark is found at Tyr1068, Tyr1230, Tyr1231, and Tyr1265. The segment at 1291 to 1331 (HRQESGFSCKGPGQNVAVTRAHPDSQGRRRRPERGARGGQV) is disordered. Phosphotyrosine; by autocatalysis and SRC is present on residues Tyr1333 and Tyr1337. Position 1363 is a phosphotyrosine; by autocatalysis (Tyr1363).

The protein belongs to the protein kinase superfamily. Tyr protein kinase family. CSF-1/PDGF receptor subfamily. In terms of assembly, interacts with VEGFC and VEGFD. Monomer in the absence of bound VEGFC or VEGFD. Homodimer in the presence of bound VEGFC or VEGFD. Can also form a heterodimer with KDR. Interacts with PTPN14; the interaction is enhanced by stimulation with VEGFC. Interacts with CRK, GRB2, PTK2/FAK1, SHC1, PIK3R1 and PTPN11/SHP-2. Identified in a complex with SRC and ITGB1. Post-translationally, autophosphorylated on tyrosine residues upon ligand binding. Autophosphorylation occurs in trans, i.e. one subunit of the dimeric receptor phosphorylates tyrosine residues on the other subunit. Phosphorylation in response to H(2)O(2) is mediated by a process that requires SRC and PRKCD activity. Phosphorylation at Tyr-1068 is required for autophosphorylation at additional tyrosine residues. Phosphorylation at Tyr-1063 and Tyr-1337 is important for interaction with CRK and subsequent activation of MAPK8. Phosphorylation at Tyr-1230, Tyr-1231 and Tyr-1337 is important for interaction with GRB2 and subsequent activation of the AKT1 and MAPK1/ERK2 and/or MAPK3/ERK1 signaling pathways. In response to endothelial cell adhesion onto collagen, can also be phosphorylated in the absence of FLT4 kinase activity by SRC at Tyr-830, Tyr-833, Tyr-853, Tyr-1063, Tyr-1333, and Tyr-1337. Detected in endothelial cells (at protein level). Widely expressed. Detected in fetal spleen, lung and brain. Detected in adult liver, muscle, thymus, placenta, lung, testis, ovary, prostate, heart, and kidney.

The protein localises to the cell membrane. Its subcellular location is the cytoplasm. The protein resides in the nucleus. It is found in the secreted. The catalysed reaction is L-tyrosyl-[protein] + ATP = O-phospho-L-tyrosyl-[protein] + ADP + H(+). Its activity is regulated as follows. Present in an inactive conformation in the absence of bound ligand. Binding of VEGFC or VEGFD leads to dimerization and activation by autophosphorylation on tyrosine residues. Inhibited by MAZ51. In terms of biological role, tyrosine-protein kinase that acts as a cell-surface receptor for VEGFC and VEGFD, and plays an essential role in adult lymphangiogenesis and in the development of the vascular network and the cardiovascular system during embryonic development. Promotes proliferation, survival and migration of endothelial cells, and regulates angiogenic sprouting. Signaling by activated FLT4 leads to enhanced production of VEGFC, and to a lesser degree VEGFA, thereby creating a positive feedback loop that enhances FLT4 signaling. Modulates KDR signaling by forming heterodimers. The secreted isoform 3 may function as a decoy receptor for VEGFC and/or VEGFD and play an important role as a negative regulator of VEGFC-mediated lymphangiogenesis and angiogenesis. Binding of vascular growth factors to isoform 1 or isoform 2 leads to the activation of several signaling cascades; isoform 2 seems to be less efficient in signal transduction, because it has a truncated C-terminus and therefore lacks several phosphorylation sites. Mediates activation of the MAPK1/ERK2, MAPK3/ERK1 signaling pathway, of MAPK8 and the JUN signaling pathway, and of the AKT1 signaling pathway. Phosphorylates SHC1. Mediates phosphorylation of PIK3R1, the regulatory subunit of phosphatidylinositol 3-kinase. Promotes phosphorylation of MAPK8 at 'Thr-183' and 'Tyr-185', and of AKT1 at 'Ser-473'. This Homo sapiens (Human) protein is Vascular endothelial growth factor receptor 3 (FLT4).